A 465-amino-acid chain; its full sequence is Tapasin (465 aa).

Residues 1-23 (MKPLLLLVAVALGLATVVSVVSA) form the signal peptide. Over 24–416 (GPEAIECWFV…GFSGPSIEDG (393 aa)) the chain is Lumenal. C30 and C94 are joined by a disulfide. N256 carries an N-linked (GlcNAc...) asparagine glycan. The Ig-like C1-type domain occupies 295 to 402 (PRVSLTPAPV…PASGRSADVT (108 aa)). Cysteines 318 and 385 form a disulfide. Residues 417 to 437 (IGLFLSAFLLLGLLKVLGWLA) form a helical membrane-spanning segment. The Cytoplasmic segment spans residues 438–465 (AYWTIPEVSKEKATAASLTIPRNSKKSQ).

Heterodimer with PDIA3; disulfide-linked. Obligatory mediator for the interaction between newly assembled MHC class I molecules, calreticulin, PDIA3 and TAP. Up to 4 MHC class I/tapasin complexes bind to 1 TAP. Interacts with HLA-G-B2M complex; this interaction is required for loading of high affinity peptides. On its own or as part of MHC class I peptide loading complex, interacts with ligand-free MR1 or MR1-B2M complex, providing for stable MR1 pools ready for metabolite antigen processing.

Its subcellular location is the endoplasmic reticulum membrane. Functionally, involved in the association of MHC class I with transporter associated with antigen processing (TAP) and in the assembly of MHC class I with peptide (peptide loading). The sequence is that of Tapasin (Tapbp) from Mus musculus (Mouse).